The sequence spans 755 residues: Metabotropic glutamate receptor-like protein B (755 aa).

The first 23 residues, 1 to 23, serve as a signal peptide directing secretion; that stretch reads MKNLISIILLILIFFNYSKFVKS. 3 N-linked (GlcNAc...) asparagine glycosylation sites follow: Asn-16, Asn-183, and Asn-273. At 24–385 the chain is on the extracellular side; that stretch reads KNCKIAVLLS…VDYSSSMKLG (362 aa). Residues 386–406 form a helical membrane-spanning segment; sequence ITITSSICIFLCIISIIIVLV. The Cytoplasmic segment spans residues 407 to 417; that stretch reads FRTARIIKSAS. A helical membrane pass occupies residues 418 to 438; it reads PAFLFLILMGCILIFIGCIIF. The Extracellular segment spans residues 439-455; it reads SQSPNEGTCRARVWLLS. Residues 456 to 476 traverse the membrane as a helical segment; sequence IGYTIFLGSLLVKNWRIWLLF. Topologically, residues 477–492 are cytoplasmic; that stretch reads DNPKLKKRSITNWKLY. A helical transmembrane segment spans residues 493 to 513; the sequence is PWVAGILAADVLILAFWQGLG. The Extracellular portion of the chain corresponds to 514–541; it reads NIRSESRIGIDSLTKYQYTNVCSSNDQG. A helical transmembrane segment spans residues 542-562; that stretch reads SIALYILLVFHGIKLLVACFI. Topologically, residues 563 to 578 are cytoplasmic; it reads SFKIKVVDIDEFNESK. A helical transmembrane segment spans residues 579-599; that stretch reads PIASSVYIITFCLFIVIPLMV. Over 600–607 the chain is Extracellular; sequence SPQSVTSQ. The chain crosses the membrane as a helical span at residues 608 to 628; it reads VTTICVCAIVTTLISIILLFG. The Cytoplasmic segment spans residues 629–755; it reads SKFYKMITQG…GEVEIDSNNL (127 aa). Disordered regions lie at residues 656 to 676 and 691 to 729; these read QSLE…EENG and FSSD…NIEE. Residues 694-710 show a composition bias toward acidic residues; that stretch reads DTEDDENETQQIDEEKD.

This sequence in the N-terminal section; belongs to the BMP lipoprotein family. The protein in the C-terminal section; belongs to the G-protein coupled receptor 3 family. GABA-B receptor subfamily.

The protein resides in the membrane. This chain is Metabotropic glutamate receptor-like protein B (grlB), found in Dictyostelium discoideum (Social amoeba).